The chain runs to 104 residues: Circadian clock oscillator protein KaiB (104 aa).

The protein belongs to the KaiB family. The KaiABC complex composition changes during the circadian cycle to control KaiC phosphorylation. Complexes KaiC(6), KaiA(2-4):KaiC(6), KaiB(6):KaiC(6) and KaiC(6):KaiB(6):KaiA(12) are among the most important forms, many form cooperatively. Undergoes a major conformational rearrangment; in the free state forms homotetramers as a dimer of dimers. When bound to the CI domain of KaiC switches to a monomeric thioredoxin-fold (KaiB(fs)). KaiB(fs) binds CikA, leading it to dephosphorylate phospho-RpaA.

Its function is as follows. Key component of the KaiABC oscillator complex, which constitutes the main circadian regulator in cyanobacteria. Complex composition changes during the circadian cycle to control KaiC phosphorylation. KaiA stimulates KaiC autophosphorylation, while KaiB sequesters KaiA, leading to KaiC autodephosphorylation. Phospho-Ser-431 KaiC accumulation triggers binding of KaiB to form the KaiB(6):KaiC(6) complex, leading to changes in output regulators CikA and SasA. KaiB switches to a thioredoxin-like fold (KaiB(fs)) when bound to KaiC. KaiB(6):KaiC(6) formation exposes a site for KaiA binding that sequesters KaiA from KaiC, making the KaiC(6):KaiB(6):KaiA(12) complex that results in KaiC autodephosphorylation. In terms of biological role, a metamorphic protein which reversibly switches between an inactive tetrameric fold and a rare, thioredoxin-like monomeric fold (KaiB(fs)). KaiB(fs) binds phospho-KaiC, KaiA and CikA. KaiA and CikA compete for binding to KaiB(fs), and KaiB(fs) and SasA compete for binding to KaiC, thus the clock oscillator and output signal pathway are tightly coupled. This chain is Circadian clock oscillator protein KaiB, found in Nostoc punctiforme (strain ATCC 29133 / PCC 73102).